Reading from the N-terminus, the 179-residue chain is Inner membrane-spanning protein YciB (179 aa).

The next 5 membrane-spanning stretches (helical) occupy residues 22 to 42 (IYAA…YSWV), 50 to 70 (MALI…FFHN), 76 to 96 (WKVT…QWVM), 121 to 141 (LAWA…AFWL), and 149 to 169 (FKVF…GIYI).

It belongs to the YciB family.

The protein resides in the cell inner membrane. Its function is as follows. Plays a role in cell envelope biogenesis, maintenance of cell envelope integrity and membrane homeostasis. This is Inner membrane-spanning protein YciB from Klebsiella pneumoniae (strain 342).